The chain runs to 950 residues: Translation initiation factor IF-2 (950 aa).

Disordered stretches follow at residues 69 to 92 (KTKTVPETAKSKQEDHPRTFAGKA) and 128 to 352 (KPKV…SNVP). Basic and acidic residues-rich tracts occupy residues 77 to 86 (AKSKQEDHPR), 128 to 158 (KPKVAEPVKKSEPKAAAKAEETKVEKVEAKA), 165 to 186 (AEVKTENVADKKEPVVTEEKKK), 200 to 234 (KRAEDIKKEQAAARPEKKKFDKNRNDRNNRNDNRR), and 291 to 312 (NRRDRDRKKTDSNRDNTKDGNR). Polar residues-rich tracts occupy residues 322-336 (NRNQVRNARNSNWNQ) and 343-352 (YQNNQSSNVP). The tr-type G domain maps to 448 to 619 (ERPAVVTIMG…LLVAEVQELK (172 aa)). The G1 stretch occupies residues 457 to 464 (GHVDHGKT). Residue 457-464 (GHVDHGKT) coordinates GTP. Positions 482 to 486 (GITQH) are G2. The interval 503 to 506 (DTPG) is G3. GTP is bound by residues 503–507 (DTPGH) and 557–560 (NKID). A G4 region spans residues 557-560 (NKID). The tract at residues 595 to 597 (SAK) is G5.

This sequence belongs to the TRAFAC class translation factor GTPase superfamily. Classic translation factor GTPase family. IF-2 subfamily.

Its subcellular location is the cytoplasm. Functionally, one of the essential components for the initiation of protein synthesis. Protects formylmethionyl-tRNA from spontaneous hydrolysis and promotes its binding to the 30S ribosomal subunits. Also involved in the hydrolysis of GTP during the formation of the 70S ribosomal complex. The chain is Translation initiation factor IF-2 from Lactococcus lactis subsp. cremoris (strain SK11).